The chain runs to 340 residues: tRNA N6-adenosine threonylcarbamoyltransferase (340 aa).

Fe cation contacts are provided by H113 and H117. Substrate-binding positions include 135-139 (LVSGG), D169, G182, D186, and N274. D302 is a binding site for Fe cation.

This sequence belongs to the KAE1 / TsaD family. Fe(2+) is required as a cofactor.

It is found in the cytoplasm. The catalysed reaction is L-threonylcarbamoyladenylate + adenosine(37) in tRNA = N(6)-L-threonylcarbamoyladenosine(37) in tRNA + AMP + H(+). Its function is as follows. Required for the formation of a threonylcarbamoyl group on adenosine at position 37 (t(6)A37) in tRNAs that read codons beginning with adenine. Is involved in the transfer of the threonylcarbamoyl moiety of threonylcarbamoyl-AMP (TC-AMP) to the N6 group of A37, together with TsaE and TsaB. TsaD likely plays a direct catalytic role in this reaction. This Mycobacterium sp. (strain KMS) protein is tRNA N6-adenosine threonylcarbamoyltransferase.